Here is a 631-residue protein sequence, read N- to C-terminus: Pro-interleukin-16 (631 aa).

Disordered regions lie at residues 30–269 (ENPG…FPLT) and 317–344 (PKEGASPTSSSNEDSAANGSAETSASDT). Positions 132–144 (SSSSSSIKQRISS) are enriched in low complexity. Residue S221 is modified to Phosphoserine. Over residues 322-344 (SPTSSSNEDSAANGSAETSASDT) the composition is skewed to polar residues. The tract at residues 405-501 (KQLDSIHVTI…IVTRKLTAES (97 aa)) is interaction with PPP1R12A, PPP1R12B and PPP1R12C. 2 consecutive PDZ domains span residues 411-496 (HVTI…VTRK) and 533-618 (TVTL…IRRK).

Homotetramer. Pro-interleukin-16 interacts (via PDZ 2 domain) with PPP1R12A, PPP1R12B and PPP1R12C. Pro-interleukin-16 interacts with GRIN2A. Pro-interleukin-16 interacts with GABPB1. Pro-interleukin-16 interacts (via PDZ 3 domain) with HDAC3.

It localises to the secreted. The protein resides in the cytoplasm. The protein localises to the nucleus. In terms of biological role, interleukin-16 stimulates a migratory response in CD4+ lymphocytes, monocytes, and eosinophils. Primes CD4+ T-cells for IL-2 and IL-15 responsiveness. Also induces T-lymphocyte expression of interleukin 2 receptor. Ligand for CD4. Functionally, pro-interleukin-16 is involved in cell cycle progression in T-cells. Appears to be involved in transcriptional regulation of SKP2 and is probably part of a transcriptional repression complex on the core promoter of the SKP2 gene. May act as a scaffold for GABPB1 (the DNA-binding subunit the GABP transcription factor complex) and HDAC3 thus maintaining transcriptional repression and blocking cell cycle progression in resting T-cells. In Chlorocebus aethiops (Green monkey), this protein is Pro-interleukin-16 (IL16).